The following is a 147-amino-acid chain: ATP synthase epsilon chain 2 (147 aa).

It belongs to the ATPase epsilon chain family. As to quaternary structure, F-type ATPases have 2 components, CF(1) - the catalytic core - and CF(0) - the membrane proton channel. CF(1) has five subunits: alpha(3), beta(3), gamma(1), delta(1), epsilon(1). CF(0) has three main subunits: a, b and c.

The protein resides in the cell inner membrane. Its function is as follows. Produces ATP from ADP in the presence of a proton gradient across the membrane. The protein is ATP synthase epsilon chain 2 of Photobacterium profundum (strain SS9).